Reading from the N-terminus, the 456-residue chain is Bifunctional protein GlmU (456 aa).

The interval 1–229 is pyrophosphorylase; the sequence is MLNSAMSVVI…LSEVEGVNNR (229 aa). UDP-N-acetyl-alpha-D-glucosamine-binding positions include 11–14, Lys-25, Gln-76, 81–82, 103–105, Gly-140, Glu-154, Asn-169, and Asn-227; these read LAAG, GT, and YGD. Residue Asp-105 participates in Mg(2+) binding. Asn-227 contacts Mg(2+). Positions 230–250 are linker; the sequence is LQLSALERIYQREQADKLLLA. The segment at 251–456 is N-acetyltransferase; that stretch reads GVMLLDPARF…SGWQRPVKKK (206 aa). UDP-N-acetyl-alpha-D-glucosamine is bound by residues Arg-333 and Lys-351. The active-site Proton acceptor is His-363. 2 residues coordinate UDP-N-acetyl-alpha-D-glucosamine: Tyr-366 and Asn-377. Acetyl-CoA is bound by residues Ala-380, 386-387, Ser-405, Ala-423, and Arg-440; that span reads NY.

The protein in the N-terminal section; belongs to the N-acetylglucosamine-1-phosphate uridyltransferase family. In the C-terminal section; belongs to the transferase hexapeptide repeat family. As to quaternary structure, homotrimer. Mg(2+) is required as a cofactor.

It is found in the cytoplasm. It catalyses the reaction alpha-D-glucosamine 1-phosphate + acetyl-CoA = N-acetyl-alpha-D-glucosamine 1-phosphate + CoA + H(+). It carries out the reaction N-acetyl-alpha-D-glucosamine 1-phosphate + UTP + H(+) = UDP-N-acetyl-alpha-D-glucosamine + diphosphate. The protein operates within nucleotide-sugar biosynthesis; UDP-N-acetyl-alpha-D-glucosamine biosynthesis; N-acetyl-alpha-D-glucosamine 1-phosphate from alpha-D-glucosamine 6-phosphate (route II): step 2/2. It participates in nucleotide-sugar biosynthesis; UDP-N-acetyl-alpha-D-glucosamine biosynthesis; UDP-N-acetyl-alpha-D-glucosamine from N-acetyl-alpha-D-glucosamine 1-phosphate: step 1/1. It functions in the pathway bacterial outer membrane biogenesis; LPS lipid A biosynthesis. Functionally, catalyzes the last two sequential reactions in the de novo biosynthetic pathway for UDP-N-acetylglucosamine (UDP-GlcNAc). The C-terminal domain catalyzes the transfer of acetyl group from acetyl coenzyme A to glucosamine-1-phosphate (GlcN-1-P) to produce N-acetylglucosamine-1-phosphate (GlcNAc-1-P), which is converted into UDP-GlcNAc by the transfer of uridine 5-monophosphate (from uridine 5-triphosphate), a reaction catalyzed by the N-terminal domain. The polypeptide is Bifunctional protein GlmU (Pectobacterium atrosepticum (strain SCRI 1043 / ATCC BAA-672) (Erwinia carotovora subsp. atroseptica)).